A 141-amino-acid polypeptide reads, in one-letter code: Hemoglobin subunit alpha (141 aa).

In terms of domain architecture, Globin spans 1–141 (VLSPADKTNI…VSTVLTSKYR (141 aa)). At Ser-3 the chain carries Phosphoserine. Lys-7 is modified (N6-succinyllysine). Thr-8 carries the post-translational modification Phosphothreonine. An N6-succinyllysine modification is found at Lys-11. Lys-16 bears the N6-acetyllysine; alternate mark. Lys-16 is subject to N6-succinyllysine; alternate. A Phosphotyrosine modification is found at Tyr-24. Ser-35 is modified (phosphoserine). Lys-40 carries the N6-succinyllysine modification. Ser-49 carries the post-translational modification Phosphoserine. His-58 serves as a coordination point for O2. A heme b-binding site is contributed by His-87. The residue at position 102 (Ser-102) is a Phosphoserine. Position 108 is a phosphothreonine (Thr-108). The residue at position 124 (Ser-124) is a Phosphoserine. Thr-134 and Thr-137 each carry phosphothreonine. Ser-138 carries the post-translational modification Phosphoserine.

Belongs to the globin family. As to quaternary structure, heterotetramer of two alpha chains and two beta chains. In terms of tissue distribution, red blood cells.

Its function is as follows. Involved in oxygen transport from the lung to the various peripheral tissues. In terms of biological role, hemopressin acts as an antagonist peptide of the cannabinoid receptor CNR1. Hemopressin-binding efficiently blocks cannabinoid receptor CNR1 and subsequent signaling. The polypeptide is Hemoglobin subunit alpha (HBA) (Chrysocyon brachyurus (Maned wolf)).